The primary structure comprises 299 residues: Probable lipid kinase YegS (299 aa).

The DAGKc domain maps to 2 to 133; it reads ANFPASLLIL…IDMARVNDKT (132 aa). ATP contacts are provided by residues threonine 40, 66-72, and threonine 95; that span reads GDGTINE. Mg(2+) contacts are provided by leucine 215, aspartate 218, and leucine 220. The active-site Proton acceptor is the glutamate 271.

It belongs to the diacylglycerol/lipid kinase family. YegS lipid kinase subfamily. It depends on Mg(2+) as a cofactor. Requires Ca(2+) as cofactor.

It is found in the cytoplasm. Probably phosphorylates lipids; the in vivo substrate is unknown. In Salmonella agona (strain SL483), this protein is Probable lipid kinase YegS.